A 201-amino-acid chain; its full sequence is Recombination protein RecR (201 aa).

The segment at 57–72 (CADCRTFTEQEHCTIC) adopts a C4-type zinc-finger fold. A Toprim domain is found at 81-176 (GQICVVESPA…LASRIAHGVP (96 aa)).

It belongs to the RecR family.

Its function is as follows. May play a role in DNA repair. It seems to be involved in an RecBC-independent recombinational process of DNA repair. It may act with RecF and RecO. This Yersinia pestis bv. Antiqua (strain Antiqua) protein is Recombination protein RecR.